Here is a 278-residue protein sequence, read N- to C-terminus: NAD kinase (278 aa).

The active-site Proton acceptor is Asp-67. Residues 67–68 (DG), Arg-72, 137–138 (NE), Lys-148, Arg-165, Asp-167, 178–183 (TGYALS), and Gln-237 each bind NAD(+).

Belongs to the NAD kinase family. The cofactor is a divalent metal cation.

The protein localises to the cytoplasm. It carries out the reaction NAD(+) + ATP = ADP + NADP(+) + H(+). Involved in the regulation of the intracellular balance of NAD and NADP, and is a key enzyme in the biosynthesis of NADP. Catalyzes specifically the phosphorylation on 2'-hydroxyl of the adenosine moiety of NAD to yield NADP. The sequence is that of NAD kinase from Thermococcus gammatolerans (strain DSM 15229 / JCM 11827 / EJ3).